The sequence spans 620 residues: Dihydroxy-acid dehydratase (620 aa).

Asp-81 contributes to the Mg(2+) binding site. Cys-122 serves as a coordination point for [2Fe-2S] cluster. Positions 123 and 124 each coordinate Mg(2+). At Lys-124 the chain carries N6-carboxylysine. [2Fe-2S] cluster is bound at residue Cys-195. Glu-491 contacts Mg(2+). Residue Ser-517 is the Proton acceptor of the active site.

The protein belongs to the IlvD/Edd family. Homodimer. [2Fe-2S] cluster serves as cofactor. Requires Mg(2+) as cofactor.

The catalysed reaction is (2R)-2,3-dihydroxy-3-methylbutanoate = 3-methyl-2-oxobutanoate + H2O. It carries out the reaction (2R,3R)-2,3-dihydroxy-3-methylpentanoate = (S)-3-methyl-2-oxopentanoate + H2O. It participates in amino-acid biosynthesis; L-isoleucine biosynthesis; L-isoleucine from 2-oxobutanoate: step 3/4. Its pathway is amino-acid biosynthesis; L-valine biosynthesis; L-valine from pyruvate: step 3/4. Functions in the biosynthesis of branched-chain amino acids. Catalyzes the dehydration of (2R,3R)-2,3-dihydroxy-3-methylpentanoate (2,3-dihydroxy-3-methylvalerate) into 2-oxo-3-methylpentanoate (2-oxo-3-methylvalerate) and of (2R)-2,3-dihydroxy-3-methylbutanoate (2,3-dihydroxyisovalerate) into 2-oxo-3-methylbutanoate (2-oxoisovalerate), the penultimate precursor to L-isoleucine and L-valine, respectively. This is Dihydroxy-acid dehydratase from Colwellia psychrerythraea (strain 34H / ATCC BAA-681) (Vibrio psychroerythus).